A 468-amino-acid chain; its full sequence is Probable multidrug resistance protein NorM (468 aa).

11 helical membrane-spanning segments follow: residues L57–T79, I100–A122, Y142–L164, L173–A195, G205–G227, L248–G270, S280–G302, H323–V345, P360–V382, V401–F423, and W433–H452.

Belongs to the multi antimicrobial extrusion (MATE) (TC 2.A.66.1) family.

Its subcellular location is the cell inner membrane. Multidrug efflux pump. In Burkholderia mallei (strain ATCC 23344), this protein is Probable multidrug resistance protein NorM (norM).